The chain runs to 395 residues: Abhydrolase domain-containing protein (395 aa).

One can recognise an AB hydrolase-1 domain in the interval 117–331; the sequence is PTIVINHGLT…INAIDDPIAP (215 aa). Residues S200, D327, and H356 each act as charge relay system in the active site.

Belongs to the AB hydrolase superfamily. AB hydrolase 4 family.

The polypeptide is Abhydrolase domain-containing protein (abhd) (Dictyostelium discoideum (Social amoeba)).